The chain runs to 672 residues: Zinc finger protein 271 (672 aa).

Positions 1-29 (MEIQFNYESQEHHLLSDGENKTKIGKPAS) are disordered. Over residues 9–22 (SQEHHLLSDGENKT) the composition is skewed to basic and acidic residues. Residues 80-102 (HNCDEYGQSFVWNTGLFRHRKTH) form a C2H2-type 1; degenerate zinc finger. 19 C2H2-type zinc fingers span residues 107–129 (YECDKCGKAFSVSSALVLHQRIH), 135–157 (YSCNWCIKSFSRSSDLIKHQRVH), 163–185 (YKCDECGKAFSQSSDLIIHQRIH), 191–213 (YQCSHCSKSFSQRSDLVKHQRIH), 219–241 (YTCNQCNKHFSQSSDVIKHQRIH), 247–269 (YKCDVCAKAFSQSSDLILHQRIH), 275–297 (YPCNQCSKSFSQNSDLIKHRRIH), 303–325 (YKCNECGKAFNQSSVLILHQRIH), 331–353 (YPCDQCSKTFSRLSDLINHQRIH), 359–381 (YPCNQCNKMFSRRSDLVKHHRIH), 387–409 (YECDECGKTFSQSSNLILHQRIH), 415–437 (YPCSDCTKSFSRRSDLVKHQRIH), 443–465 (YACNQCDKSFSQSSDLTKHQRVH), 471–493 (YHCNSCEKAFSQSSDLILHQRIH), 499–521 (YLCTQCSKSFSQNSDLIKHQRIH), 527–549 (YKCSECRKAFSQCSALTLHQRIH), 555–577 (NPCNECGKSFSRHSDLINHQKIH), 583–605 (YKCDACGKAFSTCTDLIEHQKIH), and 611–633 (YRCVQCSRSFSQLSELTIHEEVH).

Belongs to the krueppel C2H2-type zinc-finger protein family.

Its subcellular location is the nucleus. May be involved in transcriptional regulation. The sequence is that of Zinc finger protein 271 (ZNF271) from Pongo abelii (Sumatran orangutan).